Here is a 446-residue protein sequence, read N- to C-terminus: Tubulin beta-1 chain (446 aa).

GTP-binding residues include Gln11, Glu69, Ser138, Gly142, Thr143, Gly144, Asn204, and Asn226. Glu69 provides a ligand contact to Mg(2+).

Belongs to the tubulin family. As to quaternary structure, dimer of alpha and beta chains. A typical microtubule is a hollow water-filled tube with an outer diameter of 25 nm and an inner diameter of 15 nM. Alpha-beta heterodimers associate head-to-tail to form protofilaments running lengthwise along the microtubule wall with the beta-tubulin subunit facing the microtubule plus end conferring a structural polarity. Microtubules usually have 13 protofilaments but different protofilament numbers can be found in some organisms and specialized cells. Mg(2+) is required as a cofactor.

The protein resides in the cytoplasm. Its subcellular location is the cytoskeleton. Its function is as follows. Tubulin is the major constituent of microtubules, a cylinder consisting of laterally associated linear protofilaments composed of alpha- and beta-tubulin heterodimers. Microtubules grow by the addition of GTP-tubulin dimers to the microtubule end, where a stabilizing cap forms. Below the cap, tubulin dimers are in GDP-bound state, owing to GTPase activity of alpha-tubulin. The chain is Tubulin beta-1 chain (TUBB1) from Suillus bovinus (Jersey cow bolete).